Reading from the N-terminus, the 229-residue chain is Potassium/proton antiporter CemA (229 aa).

3 consecutive transmembrane segments (helical) span residues phenylalanine 7–phenylalanine 27, leucine 114–leucine 134, and isoleucine 189–isoleucine 209.

It belongs to the CemA family.

The protein localises to the plastid. The protein resides in the chloroplast inner membrane. It carries out the reaction K(+)(in) + H(+)(out) = K(+)(out) + H(+)(in). Functionally, contributes to K(+)/H(+) antiport activity by supporting proton efflux to control proton extrusion and homeostasis in chloroplasts in a light-dependent manner to modulate photosynthesis. Prevents excessive induction of non-photochemical quenching (NPQ) under continuous-light conditions. Indirectly promotes efficient inorganic carbon uptake into chloroplasts. The polypeptide is Potassium/proton antiporter CemA (Ipomoea purpurea (Common morning glory)).